A 911-amino-acid chain; its full sequence is Epithelial discoidin domain-containing receptor 1 (911 aa).

A signal peptide spans 1-19 (MGTGTLSSLLLLLLLVTIG). The Extracellular segment spans residues 22 to 415 (DMKGHFDPAK…VAKAEGSPTA (394 aa)). The 155-residue stretch at 32 to 186 (CRYALGMQDR…VCLRVELYGC (155 aa)) folds into the F5/8 type C domain. Disulfide bonds link Cys-32–Cys-186 and Cys-75–Cys-178. A DS-like domain region spans residues 193–369 (LSYTAPVGQT…LFSEISFISD (177 aa)). Ca(2+) is bound by residues Asn-213, Gln-232, Asp-235, Val-237, Tyr-255, and Tyr-257. The N-linked (GlcNAc...) asparagine glycan is linked to Asn-213. Asn-262 carries an N-linked (GlcNAc...) asparagine glycan. The cysteines at positions 305 and 350 are disulfide-linked. Residues Ser-362 and Glu-363 each coordinate Ca(2+). 2 N-linked (GlcNAc...) asparagine glycosylation sites follow: Asn-372 and Asn-392. Residues 416–436 (ILIGCLVAIILLLLLIIALML) traverse the membrane as a helical segment. Residues 437-911 (WRLHWRRLLS…FLADDALNTV (475 aa)) are Cytoplasmic-facing. The interval 468–496 (ILINNRPGPREPPPYQEPRPRGTPPHSAP) is disordered. Positions 477-494 (REPPPYQEPRPRGTPPHS) are enriched in pro residues. The PPxY motif signature appears at 479–482 (PPPY). Phosphotyrosine; by autocatalysis occurs at positions 482, 511, and 518. In terms of domain architecture, Protein kinase spans 608-903 (LRFKEKLGEG…PPFAQLHRFL (296 aa)). ATP contacts are provided by residues 614–622 (LGEGQFGEV) and Lys-653. At Tyr-738 the chain carries Phosphotyrosine; by autocatalysis. Asp-764 functions as the Proton acceptor in the catalytic mechanism. Residues Tyr-790, Tyr-794, and Tyr-795 each carry the phosphotyrosine; by autocatalysis modification.

Belongs to the protein kinase superfamily. Tyr protein kinase family. Insulin receptor subfamily. As to quaternary structure, homodimer. Interacts (via PPxY motif) with WWC1 (via WW domains) in a collagen-regulated manner. Forms a tripartite complex with WWC1 and PRKCZ, but predominantly in the absence of collagen. Interacts (tyrosine phosphorylated) with SHC1. Interacts with SRC. Interacts with MYH9. Interacts with CDH1. Interacts with PTPN11. Interacts with NCK2. Autophosphorylated in response to fibrillar collagen binding. As to expression, detected in the cochlea and the organ of Corti in the inner ear. Isoform 1 is predominant and is expressed in developing embryo and adult brain. Isoform 2 is expressed in various epithelial cells.

It is found in the cell membrane. It catalyses the reaction L-tyrosyl-[protein] + ATP = O-phospho-L-tyrosyl-[protein] + ADP + H(+). In terms of biological role, tyrosine kinase that functions as a cell surface receptor for fibrillar collagen and regulates cell attachment to the extracellular matrix, remodeling of the extracellular matrix, cell migration, differentiation, survival and cell proliferation. Collagen binding triggers a signaling pathway that involves SRC and leads to the activation of MAP kinases. Regulates remodeling of the extracellular matrix by up-regulation of the matrix metalloproteinases MMP2, MMP7 and MMP9, and thereby facilitates cell migration and wound healing, but also tumor cell invasion. Promotes smooth muscle cell migration, and thereby contributes to arterial wound healing. Phosphorylates PTPN11. Required for normal blastocyst implantation during pregnancy, for normal mammary gland differentiation and normal lactation. Required for normal ear morphology and normal hearing. This Mus musculus (Mouse) protein is Epithelial discoidin domain-containing receptor 1 (Ddr1).